A 241-amino-acid polypeptide reads, in one-letter code: tRNA (guanine-N(1)-)-methyltransferase (241 aa).

Residues glycine 108 and 127–132 (LGDYVL) each bind S-adenosyl-L-methionine.

The protein belongs to the RNA methyltransferase TrmD family. As to quaternary structure, homodimer.

Its subcellular location is the cytoplasm. It carries out the reaction guanosine(37) in tRNA + S-adenosyl-L-methionine = N(1)-methylguanosine(37) in tRNA + S-adenosyl-L-homocysteine + H(+). In terms of biological role, specifically methylates guanosine-37 in various tRNAs. The chain is tRNA (guanine-N(1)-)-methyltransferase from Streptococcus suis (strain 98HAH33).